A 611-amino-acid chain; its full sequence is Elongation factor 4 1 (611 aa).

A tr-type G domain is found at 11–193 (QHIRNFSIVA…QIVHKIPAPQ (183 aa)). Residues 23–28 (DHGKST) and 140–143 (NKID) contribute to the GTP site.

The protein belongs to the TRAFAC class translation factor GTPase superfamily. Classic translation factor GTPase family. LepA subfamily.

Its subcellular location is the cell membrane. It carries out the reaction GTP + H2O = GDP + phosphate + H(+). Required for accurate and efficient protein synthesis under certain stress conditions. May act as a fidelity factor of the translation reaction, by catalyzing a one-codon backward translocation of tRNAs on improperly translocated ribosomes. Back-translocation proceeds from a post-translocation (POST) complex to a pre-translocation (PRE) complex, thus giving elongation factor G a second chance to translocate the tRNAs correctly. Binds to ribosomes in a GTP-dependent manner. The sequence is that of Elongation factor 4 1 from Lactiplantibacillus plantarum (strain ATCC BAA-793 / NCIMB 8826 / WCFS1) (Lactobacillus plantarum).